A 59-amino-acid polypeptide reads, in one-letter code: MAVQQNRKSRSRRGMRRSHDALSSAALSIDPTTGEKHRRHHVTPDGFYRGKKVVEVSQD.

A disordered region spans residues methionine 1 to aspartate 59. Residues arginine 7 to arginine 16 are compositionally biased toward basic residues.

It belongs to the bacterial ribosomal protein bL32 family.

The sequence is that of Large ribosomal subunit protein bL32 from Hahella chejuensis (strain KCTC 2396).